Consider the following 94-residue polypeptide: Small ribosomal subunit protein eS24 (94 aa).

It belongs to the eukaryotic ribosomal protein eS24 family.

This chain is Small ribosomal subunit protein eS24, found in Nanoarchaeum equitans (strain Kin4-M).